Here is a 117-residue protein sequence, read N- to C-terminus: Putative iron-sulfur cluster insertion protein ErpA (117 aa).

The iron-sulfur cluster site is built by C45, C109, and C111.

This sequence belongs to the HesB/IscA family. As to quaternary structure, homodimer. Iron-sulfur cluster is required as a cofactor.

In terms of biological role, required for insertion of 4Fe-4S clusters. The chain is Putative iron-sulfur cluster insertion protein ErpA from Methylobacillus flagellatus (strain ATCC 51484 / DSM 6875 / VKM B-1610 / KT).